The sequence spans 335 residues: Nucleoid-associated protein CKO_00588 (335 aa).

Belongs to the YejK family.

The protein resides in the cytoplasm. Its subcellular location is the nucleoid. This is Nucleoid-associated protein CKO_00588 from Citrobacter koseri (strain ATCC BAA-895 / CDC 4225-83 / SGSC4696).